Reading from the N-terminus, the 357-residue chain is NADH-quinone oxidoreductase subunit H (357 aa).

A run of 8 helical transmembrane segments spans residues 20–40, 92–112, 127–147, 165–185, 206–226, 268–288, 294–314, and 329–349; these read WLVV…ILCV, ILFI…WAVV, LLYV…AGWA, VSYE…SGSL, FLSW…ISAV, ILLS…PIDI, IPGW…FIWF, and LGWK…AIWM.

Belongs to the complex I subunit 1 family. As to quaternary structure, NDH-1 is composed of 14 different subunits. Subunits NuoA, H, J, K, L, M, N constitute the membrane sector of the complex.

The protein localises to the cell inner membrane. It carries out the reaction a quinone + NADH + 5 H(+)(in) = a quinol + NAD(+) + 4 H(+)(out). NDH-1 shuttles electrons from NADH, via FMN and iron-sulfur (Fe-S) centers, to quinones in the respiratory chain. The immediate electron acceptor for the enzyme in this species is believed to be ubiquinone. Couples the redox reaction to proton translocation (for every two electrons transferred, four hydrogen ions are translocated across the cytoplasmic membrane), and thus conserves the redox energy in a proton gradient. This subunit may bind ubiquinone. The protein is NADH-quinone oxidoreductase subunit H of Bordetella avium (strain 197N).